Here is a 284-residue protein sequence, read N- to C-terminus: Hemin import ATP-binding protein HmuV (284 aa).

One can recognise an ABC transporter domain in the interval Leu33 to Glu266. Residue Gly65 to Ser72 participates in ATP binding.

This sequence belongs to the ABC transporter superfamily. Heme (hemin) importer (TC 3.A.1.14.5) family. The complex is composed of two ATP-binding proteins (HmuV), two transmembrane proteins (HmuU) and a solute-binding protein (HmuT).

Its subcellular location is the cell membrane. Part of the ABC transporter complex HmuTUV involved in hemin import. Responsible for energy coupling to the transport system. The chain is Hemin import ATP-binding protein HmuV from Thermobifida fusca (strain YX).